Consider the following 614-residue polypeptide: Leucine-rich repeat and immunoglobulin-like domain-containing nogo receptor-interacting protein 1 (614 aa).

The N-terminal stretch at 1–35 (MLAGGVRSMPSPLLACWQPILLLVLGSVLSGSATG) is a signal peptide. 2 disulfide bridges follow: C36/C42 and C40/C51. Residues 36–65 (CPPRCECSAQDRAVLCHRKRFVAVPEGIPT) form the LRRNT domain. At 36-555 (CPPRCECSAQ…FDIKTLIIAT (520 aa)) the chain is on the extracellular side. LRR repeat units follow at residues 66 to 87 (ETRL…EFAS), 90 to 111 (HLEE…AFNN), 114 to 135 (NLRT…VFTG), 138 to 159 (NLTK…MFQD), 162 to 183 (NLKS…AFSG), 186 to 207 (SLEQ…ALSH), 210 to 231 (GLIV…SFKR), 258 to 279 (NLTS…AVRH), 282 to 303 (YLRF…MLHE), 306 to 327 (RLQE…AFRG), and 330 to 351 (YLRV…VFHS). N-linked (GlcNAc...) asparagine glycosylation occurs at N138. N-linked (GlcNAc...) asparagine glycosylation occurs at N196. N258, N268, and N287 each carry an N-linked (GlcNAc...) asparagine glycan. An N-linked (GlcNAc...) asparagine glycan is attached at N335. The 55-residue stretch at 363–417 (NPLACDCRLLWVFRRRWRLNFNRQQPTCATPEFVQGKEFKDFPDVLLPNYFTCRR) folds into the LRRCT domain. Intrachain disulfides connect C367/C390, C369/C415, and C440/C491. The region spanning 405–507 (PDVLLPNYFT…GNDSMPAHLH (103 aa)) is the Ig-like C2-type domain. N-linked (GlcNAc...) asparagine glycosylation is found at N486, N499, N520, and N536. Residues 556–576 (TMGFISFLGVVLFCLVLLFLW) traverse the membrane as a helical segment. The Cytoplasmic segment spans residues 577 to 614 (SRGKGNTKHNIEIEYVPRKSDAGISSADAPRKFNMKMI). S596 carries the post-translational modification Phosphoserine.

In terms of assembly, homotetramer. Forms a ternary complex with RTN4R/NGFR and RTN4R/TNFRSF19. Interacts with NGRF, RTN4R and MYT1L. N-glycosylated. Contains predominantly high-mannose glycans.

The protein localises to the cell membrane. Its function is as follows. Functional component of the Nogo receptor signaling complex (RTN4R/NGFR) in RhoA activation responsible for some inhibition of axonal regeneration by myelin-associated factors. Is also an important negative regulator of oligodentrocyte differentiation and axonal myelination. Acts in conjunction with RTN4 and RTN4R in regulating neuronal precursor cell motility during cortical development. The chain is Leucine-rich repeat and immunoglobulin-like domain-containing nogo receptor-interacting protein 1 (LINGO1) from Pongo abelii (Sumatran orangutan).